A 354-amino-acid polypeptide reads, in one-letter code: Uroporphyrinogen decarboxylase (354 aa).

Substrate-binding positions include 27–31 (RQAGR), Asp-77, Tyr-154, Thr-209, and His-327.

Belongs to the uroporphyrinogen decarboxylase family. As to quaternary structure, homodimer.

It is found in the cytoplasm. The catalysed reaction is uroporphyrinogen III + 4 H(+) = coproporphyrinogen III + 4 CO2. It participates in porphyrin-containing compound metabolism; protoporphyrin-IX biosynthesis; coproporphyrinogen-III from 5-aminolevulinate: step 4/4. Its function is as follows. Catalyzes the decarboxylation of four acetate groups of uroporphyrinogen-III to yield coproporphyrinogen-III. In Edwardsiella ictaluri (strain 93-146), this protein is Uroporphyrinogen decarboxylase.